A 111-amino-acid polypeptide reads, in one-letter code: MASIKFTTKDIFEQDFKIGFRGYDQDEVNDFLDDIMKDYDAYEAIIKELKGEIARLKAQAANSPKTTLPTEESNDVLRTERPSSATNFDILRRLNRLEKEVFGKQIVQDQE.

Residues 32-63 (LDDIMKDYDAYEAIIKELKGEIARLKAQAANS) are a coiled coil. Residues 59–80 (QAANSPKTTLPTEESNDVLRTE) are disordered. Residues 60–71 (AANSPKTTLPTE) show a composition bias toward polar residues.

It belongs to the GpsB family. Forms polymers through the coiled coil domains. Interacts with PBP1, MreC and EzrA.

The protein resides in the cytoplasm. In terms of biological role, divisome component that associates with the complex late in its assembly, after the Z-ring is formed, and is dependent on DivIC and PBP2B for its recruitment to the divisome. Together with EzrA, is a key component of the system that regulates PBP1 localization during cell cycle progression. Its main role could be the removal of PBP1 from the cell pole after pole maturation is completed. Also contributes to the recruitment of PBP1 to the division complex. Not essential for septum formation. This is Cell cycle protein GpsB from Streptococcus suis (strain 98HAH33).